A 138-amino-acid chain; its full sequence is Basic phospholipase A2 Mtx-b (138 aa).

A signal peptide spans 1-16 (MRALWIVAVLLVGVEG). Cystine bridges form between C42–C131, C44–C60, C59–C111, C65–C138, C66–C104, C73–C97, and C91–C102. Ca(2+) is bound by residues Y43, G45, and G47. H63 is an active-site residue. Ca(2+) is bound at residue D64. D105 is a catalytic residue.

In terms of assembly, heterodimer of an acidic subunit and a basic chain. The acidic subunit is non-toxic, without enzymatic activity and comprises 3 peptides that are cross-linked by 7 disulfide bridges. The basic subunit is toxic, has phospholipase A2 activity and is composed of a single chain. It depends on Ca(2+) as a cofactor. In terms of tissue distribution, expressed by the venom gland.

It is found in the secreted. The enzyme catalyses a 1,2-diacyl-sn-glycero-3-phosphocholine + H2O = a 1-acyl-sn-glycero-3-phosphocholine + a fatty acid + H(+). Snake venom phospholipase A2 (PLA2) that inhibits neuromuscular transmission by blocking acetylcholine release from the nerve termini. PLA2 catalyzes the calcium-dependent hydrolysis of the 2-acyl groups in 3-sn-phosphoglycerides. In Crotalus scutulatus scutulatus (Mojave rattlesnake), this protein is Basic phospholipase A2 Mtx-b.